Consider the following 215-residue polypeptide: Ribonuclease T (215 aa).

The region spanning 20–194 is the Exonuclease domain; the sequence is VVIDVETAGF…YDTLQTAKLF (175 aa). Mg(2+) contacts are provided by aspartate 23, glutamate 25, histidine 181, and aspartate 186. The Proton donor/acceptor role is filled by histidine 181.

Belongs to the RNase T family. In terms of assembly, homodimer. It depends on Mg(2+) as a cofactor.

In terms of biological role, trims short 3' overhangs of a variety of RNA species, leaving a one or two nucleotide 3' overhang. Responsible for the end-turnover of tRNA: specifically removes the terminal AMP residue from uncharged tRNA (tRNA-C-C-A). Also appears to be involved in tRNA biosynthesis. This is Ribonuclease T from Yersinia pseudotuberculosis serotype I (strain IP32953).